We begin with the raw amino-acid sequence, 629 residues long: tRNA uridine 5-carboxymethylaminomethyl modification enzyme MnmG (629 aa).

13 to 18 serves as a coordination point for FAD; that stretch reads GGGHAG. 273–287 provides a ligand contact to NAD(+); sequence GPRYCPSIEDKVVRF.

This sequence belongs to the MnmG family. In terms of assembly, homodimer. Heterotetramer of two MnmE and two MnmG subunits. Requires FAD as cofactor.

The protein localises to the cytoplasm. NAD-binding protein involved in the addition of a carboxymethylaminomethyl (cmnm) group at the wobble position (U34) of certain tRNAs, forming tRNA-cmnm(5)s(2)U34. This is tRNA uridine 5-carboxymethylaminomethyl modification enzyme MnmG from Alkalilimnicola ehrlichii (strain ATCC BAA-1101 / DSM 17681 / MLHE-1).